Here is a 412-residue protein sequence, read N- to C-terminus: Probable cystathionine gamma-synthase 2 (412 aa).

The pyridoxal 5'-phosphate site is built by Tyr76, Arg78, Gly106, Met107, Tyr131, Ser226, and Thr228. Lys229 carries the N6-(pyridoxal phosphate)lysine modification.

The protein belongs to the trans-sulfuration enzymes family. Pyridoxal 5'-phosphate serves as cofactor.

The enzyme catalyses O-phospho-L-homoserine + L-cysteine = L,L-cystathionine + phosphate. It catalyses the reaction O-succinyl-L-homoserine + L-cysteine = L,L-cystathionine + succinate + H(+). It participates in amino-acid biosynthesis; L-methionine biosynthesis via de novo pathway; L-cystathionine from O-succinyl-L-homoserine: step 1/1. Its function is as follows. Catalyzes the first committed step of methionine (Met) biosynthesis. Catalyzes the formation of L-cystathionine from homoserine esters and L-cysteine, via a gamma-replacement reaction. This chain is Probable cystathionine gamma-synthase 2, found in Arabidopsis thaliana (Mouse-ear cress).